Reading from the N-terminus, the 207-residue chain is Outer-membrane lipoprotein LolB (207 aa).

The first 21 residues, 1 to 21, serve as a signal peptide directing secretion; the sequence is MPQRKISFYRLLPLATLLLAA. Cys22 carries the N-palmitoyl cysteine lipid modification. Residue Cys22 is the site of S-diacylglycerol cysteine attachment.

Belongs to the LolB family. Monomer.

The protein localises to the cell outer membrane. Plays a critical role in the incorporation of lipoproteins in the outer membrane after they are released by the LolA protein. The chain is Outer-membrane lipoprotein LolB from Yersinia enterocolitica serotype O:8 / biotype 1B (strain NCTC 13174 / 8081).